We begin with the raw amino-acid sequence, 379 residues long: Cytochrome b (379 aa).

4 helical membrane-spanning segments follow: residues 33 to 53 (FGSL…FLAM), 77 to 98 (WLIR…FIHV), 113 to 133 (WNIG…GYVL), and 178 to 198 (FFAF…VHLL). Residues His83 and His97 each coordinate heme b. Heme b-binding residues include His182 and His196. His201 is an a ubiquinone binding site. 4 helical membrane-spanning segments follow: residues 226–246 (IKDL…ALFF), 288–308 (LGGV…PLLN), 320–340 (ITQT…WIGG), and 347–367 (FTTI…ILMP).

The protein belongs to the cytochrome b family. As to quaternary structure, the cytochrome bc1 complex contains 11 subunits: 3 respiratory subunits (MT-CYB, CYC1 and UQCRFS1), 2 core proteins (UQCRC1 and UQCRC2) and 6 low-molecular weight proteins (UQCRH/QCR6, UQCRB/QCR7, UQCRQ/QCR8, UQCR10/QCR9, UQCR11/QCR10 and a cleavage product of UQCRFS1). This cytochrome bc1 complex then forms a dimer. Heme b serves as cofactor.

It localises to the mitochondrion inner membrane. Functionally, component of the ubiquinol-cytochrome c reductase complex (complex III or cytochrome b-c1 complex) that is part of the mitochondrial respiratory chain. The b-c1 complex mediates electron transfer from ubiquinol to cytochrome c. Contributes to the generation of a proton gradient across the mitochondrial membrane that is then used for ATP synthesis. This chain is Cytochrome b (MT-CYB), found in Akodon aerosus (Highland grass mouse).